The following is a 43-amino-acid chain: Photosystem II reaction center protein K (43 aa).

A propeptide spanning residues Met1 to Ala6 is cleaved from the precursor. Residues Ile18–Ala38 traverse the membrane as a helical segment.

This sequence belongs to the PsbK family. As to quaternary structure, PSII is composed of 1 copy each of membrane proteins PsbA, PsbB, PsbC, PsbD, PsbE, PsbF, PsbH, PsbI, PsbJ, PsbK, PsbL, PsbM, PsbT, PsbX, PsbY, PsbZ, Psb30/Ycf12, at least 3 peripheral proteins of the oxygen-evolving complex and a large number of cofactors. It forms dimeric complexes.

Its subcellular location is the plastid. The protein localises to the chloroplast thylakoid membrane. Functionally, one of the components of the core complex of photosystem II (PSII). PSII is a light-driven water:plastoquinone oxidoreductase that uses light energy to abstract electrons from H(2)O, generating O(2) and a proton gradient subsequently used for ATP formation. It consists of a core antenna complex that captures photons, and an electron transfer chain that converts photonic excitation into a charge separation. In Oltmannsiellopsis viridis (Marine flagellate), this protein is Photosystem II reaction center protein K.